The chain runs to 522 residues: Type-2 serine--tRNA ligase (522 aa).

Residue Ala-319 coordinates L-serine. Cys-321 serves as a coordination point for Zn(2+). L-serine is bound at residue Arg-350. ATP is bound by residues 350-352 and 361-362; these read RWE and RV. 367 to 369 contributes to the L-serine binding site; sequence RIE. The Zn(2+) site is built by Glu-369 and Cys-476. Residue Arg-483 coordinates ATP.

Belongs to the class-II aminoacyl-tRNA synthetase family. Type-2 seryl-tRNA synthetase subfamily. As to quaternary structure, homodimer. It depends on Zn(2+) as a cofactor.

The protein resides in the cytoplasm. The catalysed reaction is tRNA(Ser) + L-serine + ATP = L-seryl-tRNA(Ser) + AMP + diphosphate + H(+). The enzyme catalyses tRNA(Sec) + L-serine + ATP = L-seryl-tRNA(Sec) + AMP + diphosphate + H(+). It functions in the pathway aminoacyl-tRNA biosynthesis; selenocysteinyl-tRNA(Sec) biosynthesis; L-seryl-tRNA(Sec) from L-serine and tRNA(Sec): step 1/1. Functionally, catalyzes the attachment of serine to tRNA(Ser). Is also able to aminoacylate tRNA(Sec) with serine, to form the misacylated tRNA L-seryl-tRNA(Sec), which will be further converted into selenocysteinyl-tRNA(Sec). The chain is Type-2 serine--tRNA ligase (serS) from Methanococcus aeolicus (strain ATCC BAA-1280 / DSM 17508 / OCM 812 / Nankai-3).